A 368-amino-acid polypeptide reads, in one-letter code: Phospho-N-acetylmuramoyl-pentapeptide-transferase (368 aa).

The next 9 membrane-spanning stretches (helical) occupy residues 50 to 70 (LLAL…VVPL), 95 to 115 (PTMG…ILAG), 117 to 137 (SPLV…GWLD), 156 to 176 (LCLQ…QQGW), 183 to 203 (ITLP…LAVF), 218 to 238 (LDGL…LWLA), 242 to 262 (PAIA…LLHN), 284 to 304 (AIAI…LFVL), and 347 to 367 (TQVV…CWLL).

Belongs to the glycosyltransferase 4 family. MraY subfamily. The cofactor is Mg(2+).

The protein localises to the cell inner membrane. It catalyses the reaction UDP-N-acetyl-alpha-D-muramoyl-L-alanyl-gamma-D-glutamyl-meso-2,6-diaminopimeloyl-D-alanyl-D-alanine + di-trans,octa-cis-undecaprenyl phosphate = di-trans,octa-cis-undecaprenyl diphospho-N-acetyl-alpha-D-muramoyl-L-alanyl-D-glutamyl-meso-2,6-diaminopimeloyl-D-alanyl-D-alanine + UMP. Its pathway is cell wall biogenesis; peptidoglycan biosynthesis. Its function is as follows. Catalyzes the initial step of the lipid cycle reactions in the biosynthesis of the cell wall peptidoglycan: transfers peptidoglycan precursor phospho-MurNAc-pentapeptide from UDP-MurNAc-pentapeptide onto the lipid carrier undecaprenyl phosphate, yielding undecaprenyl-pyrophosphoryl-MurNAc-pentapeptide, known as lipid I. The sequence is that of Phospho-N-acetylmuramoyl-pentapeptide-transferase from Synechococcus sp. (strain ATCC 27144 / PCC 6301 / SAUG 1402/1) (Anacystis nidulans).